The sequence spans 350 residues: Cytosolic Fe-S cluster assembly factor NBP35 (350 aa).

The disordered stretch occupies residues 1-30; it reads MENGDIPEDANEHCPGPQSESAGKSDSCAG. Residues cysteine 14, cysteine 28, cysteine 31, and cysteine 37 each contribute to the [4Fe-4S] cluster site. 67-74 contacts ATP; the sequence is GKGGVGKS.

It belongs to the Mrp/NBP35 ATP-binding proteins family. NUBP1/NBP35 subfamily. As to quaternary structure, homodimer and homotetramer. Predominantly homodimeric. Requires [4Fe-4S] cluster as cofactor.

Its subcellular location is the cytoplasm. In terms of biological role, component of the cytosolic iron-sulfur (Fe-S) protein assembly (CIA) machinery. Required for maturation of extramitochondrial Fe-S proteins. Functions as a Fe-S scaffold, mediating the de novo assembly of an Fe-S cluster and its transfer to target apoproteins. Essential for embryo development. This is Cytosolic Fe-S cluster assembly factor NBP35 from Arabidopsis thaliana (Mouse-ear cress).